Reading from the N-terminus, the 362-residue chain is Talin rod domain-containing protein 1 (362 aa).

The segment at 1–27 is disordered; sequence MASGSAGKPTGEAASPAPGSAVGGASS. Ala-2 carries the post-translational modification N-acetylalanine. Positions 9 to 27 are enriched in low complexity; sequence PTGEAASPAPGSAVGGASS.

In terms of assembly, may homodimerize. Interacts with F-actin. Ubiquitous.

Functionally, actin-binding protein which may have an oncogenic function and regulates cell proliferation, migration and invasion in cancer cells. The polypeptide is Talin rod domain-containing protein 1 (Mus musculus (Mouse)).